Consider the following 438-residue polypeptide: Glutamate-1-semialdehyde 2,1-aminomutase (438 aa).

The residue at position 278 (lysine 278) is an N6-(pyridoxal phosphate)lysine.

The protein belongs to the class-III pyridoxal-phosphate-dependent aminotransferase family. HemL subfamily. In terms of assembly, homodimer. It depends on pyridoxal 5'-phosphate as a cofactor.

Its subcellular location is the cytoplasm. The catalysed reaction is (S)-4-amino-5-oxopentanoate = 5-aminolevulinate. Its pathway is porphyrin-containing compound metabolism; protoporphyrin-IX biosynthesis; 5-aminolevulinate from L-glutamyl-tRNA(Glu): step 2/2. In Delftia acidovorans (strain DSM 14801 / SPH-1), this protein is Glutamate-1-semialdehyde 2,1-aminomutase.